The sequence spans 279 residues: Thymidylate synthase 1 (279 aa).

141-142 (RR) contacts dUMP. Cys-161 serves as the catalytic Nucleophile. DUMP is bound by residues 181–184 (RSND), Asn-192, and 222–224 (HVY). (6R)-5,10-methylene-5,6,7,8-tetrahydrofolate is bound at residue Asp-184. Ala-278 contacts (6R)-5,10-methylene-5,6,7,8-tetrahydrofolate.

Belongs to the thymidylate synthase family. Bacterial-type ThyA subfamily. Homodimer.

It localises to the cytoplasm. It carries out the reaction dUMP + (6R)-5,10-methylene-5,6,7,8-tetrahydrofolate = 7,8-dihydrofolate + dTMP. Its pathway is pyrimidine metabolism; dTTP biosynthesis. Catalyzes the reductive methylation of 2'-deoxyuridine-5'-monophosphate (dUMP) to 2'-deoxythymidine-5'-monophosphate (dTMP) while utilizing 5,10-methylenetetrahydrofolate (mTHF) as the methyl donor and reductant in the reaction, yielding dihydrofolate (DHF) as a by-product. This enzymatic reaction provides an intracellular de novo source of dTMP, an essential precursor for DNA biosynthesis. In Bacillus subtilis (strain 168), this protein is Thymidylate synthase 1.